A 64-amino-acid polypeptide reads, in one-letter code: UPF0434 protein TERTU_2813 (64 aa).

The protein belongs to the UPF0434 family.

The chain is UPF0434 protein TERTU_2813 from Teredinibacter turnerae (strain ATCC 39867 / T7901).